The sequence spans 834 residues: MALVSPIPAMGERAGSMRFHGIGSPGSRSSRSGIMDEPVSRLIDEKIFVAVDKHVAKSKSTLIWALQNTGGKKICLIHVHQPSQMIPLMGAKFPVGAVKEEEVRVFREKEREKVHMILDDYLRICQQRGVRAEKMFIEMESIENGIVQLISELGIRKLVMGAAADRHYSRRMTDLKSRKAIFVRREAPTLCQIWFTCKGYLIHTREATMDDTESEYASPRPSISASDLLQTFSTPESEHQHISRVQSTDSVQQLVSNGSSTEQSGRVSDGSLNTDEEERESDGSEVTGSATVMSSGHSSPSSFPDGVDDSFNVKIRKATSEAHSSKQEAFAETLRRQKAEKNALDAIRRAKQSESAYSEELKRRKDTEIAVAKEKERFITIKNEQEVIMEELQSAMAQKAMLESQIAKSDGTMEKLNQKLDIAVKLLQKLRDEREELQTERDRALREAEELRSHAETSTLQLPQYFTDFSFSEIEEATNHFDSTLKIGEGGYGSIYVGLLRHTQVAIKMLNPNSSQGPVEYQQEVDVLSKMRHPNIITLIGACPEGWSLVYEYLPGGSLEDRLTCKDNSPPLSWQNRVRIATEICAALVFLHSNKAHSLVHGDLKPANILLDSNLVSKLSDFGTCSLLHPNGSKSVRTDVTGTVAYLDPEASSSGELTPKSDVYSFGIILLRLLTGRPALRISNEVKYALDNGTLNDLLDPLAGDWPFVQAEQLARLALRCCETVSENRPDLGTEVWRVLEPMRASSGGSSSFHLGRNEHRIAPPYFICPIFQEVMQDPHVAADGFTYEAEAIRAWLDSEHDTSPMTNVKLSHTSLIANHALRSAIQEWLQHHL.

Positions 232 to 308 (FSTPESEHQH…SPSSFPDGVD (77 aa)) are disordered. Polar residues-rich tracts occupy residues 243–273 (SRVQ…GSLN) and 284–293 (SEVTGSATVM). Residues 334–462 (LRRQKAEKNA…SHAETSTLQL (129 aa)) are a coiled coil. One can recognise a Protein kinase domain in the interval 481–744 (FDSTLKIGEG…EVWRVLEPMR (264 aa)). ATP is bound by residues 487–495 (IGEGGYGSI) and Lys508. Asp603 serves as the catalytic Proton acceptor. In terms of domain architecture, U-box spans 762-834 (IAPPYFICPI…AIQEWLQHHL (73 aa)).

It belongs to the protein kinase superfamily. Ser/Thr protein kinase family.

The enzyme catalyses L-seryl-[protein] + ATP = O-phospho-L-seryl-[protein] + ADP + H(+). It catalyses the reaction L-threonyl-[protein] + ATP = O-phospho-L-threonyl-[protein] + ADP + H(+). The catalysed reaction is S-ubiquitinyl-[E2 ubiquitin-conjugating enzyme]-L-cysteine + [acceptor protein]-L-lysine = [E2 ubiquitin-conjugating enzyme]-L-cysteine + N(6)-ubiquitinyl-[acceptor protein]-L-lysine.. Its pathway is protein modification; protein ubiquitination. Its function is as follows. Functions as an E3 ubiquitin ligase. The sequence is that of U-box domain-containing protein 33 (PUB33) from Arabidopsis thaliana (Mouse-ear cress).